A 292-amino-acid polypeptide reads, in one-letter code: Acetylglutamate kinase (292 aa).

Substrate-binding positions include 72-73 (GG), R94, and N187.

The protein belongs to the acetylglutamate kinase family. ArgB subfamily.

Its subcellular location is the cytoplasm. It catalyses the reaction N-acetyl-L-glutamate + ATP = N-acetyl-L-glutamyl 5-phosphate + ADP. The protein operates within amino-acid biosynthesis; L-arginine biosynthesis; N(2)-acetyl-L-ornithine from L-glutamate: step 2/4. Functionally, catalyzes the ATP-dependent phosphorylation of N-acetyl-L-glutamate. The chain is Acetylglutamate kinase from Trichodesmium erythraeum (strain IMS101).